Here is a 94-residue protein sequence, read N- to C-terminus: Large ribosomal subunit protein uL23 (94 aa).

Belongs to the universal ribosomal protein uL23 family. As to quaternary structure, part of the 50S ribosomal subunit. Contacts protein L29, and trigger factor when it is bound to the ribosome.

In terms of biological role, one of the early assembly proteins it binds 23S rRNA. One of the proteins that surrounds the polypeptide exit tunnel on the outside of the ribosome. Forms the main docking site for trigger factor binding to the ribosome. This chain is Large ribosomal subunit protein uL23, found in Roseiflexus castenholzii (strain DSM 13941 / HLO8).